We begin with the raw amino-acid sequence, 277 residues long: S-formylglutathione hydrolase FrmB (277 aa).

Catalysis depends on charge relay system residues Ser145, Asp221, and His254.

The protein belongs to the esterase D family.

It carries out the reaction S-formylglutathione + H2O = formate + glutathione + H(+). Its function is as follows. Serine hydrolase involved in the detoxification of formaldehyde. Hydrolyzes S-formylglutathione to glutathione and formate. In Escherichia coli O157:H7, this protein is S-formylglutathione hydrolase FrmB (frmB).